We begin with the raw amino-acid sequence, 424 residues long: MQRLQVVLGHLRGPADSGWMPQAAPCLSGAPQASAADVVVVHGRRTAICRAGRGGFKDTTPDELLSAVMTAVLKDVNLRPEQLGDICVGNVLQPGAGAIMARIAQFLSDIPETVPLSTVNRQCSSGLQAVASIAGGIRNGSYDIGMACGVESMSLADRGNPGNITSRLMEKEKARDCLIPMGITSENVAERFGISREKQDTFALASQQKAARAQSKGCFQAEIVPVTTTVHDDKGTKRSITVTQDEGIRPSTTMEGLAKLKPAFKKDGSTTAGNSSQVSDGAAAILLARRSKAEELGLPILGVLRSYAVVGVPPDIMGIGPAYAIPVALQKAGLTVSDVDIFEINEAFASQAAYCVEKLRLPPEKVNPLGGAVALGHPLGCTGARQVITLLNELKRRGKRAYGVVSMCIGTGMGAAAVFEYPGN.

The transit peptide at 1-26 (MQRLQVVLGHLRGPADSGWMPQAAPC) directs the protein to the peroxisome. Residues 1-26 (MQRLQVVLGHLRGPADSGWMPQAAPC) are PTS2-type peroxisomal targeting signal. T59 and T60 each carry phosphothreonine. The active-site Acyl-thioester intermediate is C123. Catalysis depends on proton acceptor residues H377 and C408.

This sequence belongs to the thiolase-like superfamily. Thiolase family. Homodimer. Interacts (via PTS2-type peroxisomal targeting signal region) with PEX7; leading to its translocation into peroxisomes.

The protein localises to the peroxisome. The catalysed reaction is an acyl-CoA + acetyl-CoA = a 3-oxoacyl-CoA + CoA. It catalyses the reaction 2 acetyl-CoA = acetoacetyl-CoA + CoA. The enzyme catalyses tetradecanoyl-CoA + acetyl-CoA = 3-oxohexadecanoyl-CoA + CoA. It carries out the reaction hexanoyl-CoA + acetyl-CoA = 3-oxooctanoyl-CoA + CoA. The catalysed reaction is 3-oxohexadecanedioyl-CoA + CoA = tetradecanedioyl-CoA + acetyl-CoA. It catalyses the reaction 3-oxo-(6Z,9Z,12Z,15Z,18Z,21Z)-tetracosahexaenoyl-CoA + CoA = (4Z,7Z,10Z,13Z,16Z,19Z)-docosahexaenoyl-CoA + acetyl-CoA. Its pathway is lipid metabolism; peroxisomal fatty acid beta-oxidation. In terms of biological role, responsible for the thiolytic cleavage of straight chain 3-keto fatty acyl-CoAs (3-oxoacyl-CoAs). Plays an important role in fatty acid peroxisomal beta-oxidation. Catalyzes the cleavage of short, medium, long, and very long straight chain 3-oxoacyl-CoAs. This is 3-ketoacyl-CoA thiolase, peroxisomal from Homo sapiens (Human).